The primary structure comprises 140 residues: Lipoprotein MlpD (140 aa).

Residues 1–17 (MKIINILFCLFLLMLNG) form the signal peptide. Cys-18 carries the N-palmitoyl cysteine lipid modification. A lipid anchor (S-diacylglycerol cysteine) is attached at Cys-18. A disordered region spans residues 22–53 (DTNNSQTKSRQKRDLTQKEATQEKPKSKEELL). Basic and acidic residues predominate over residues 33–53 (KRDLTQKEATQEKPKSKEELL).

The protein belongs to the Multicopy lipoprotein (Mlp) family.

Its subcellular location is the cell outer membrane. An outer membrane protein that may participate in pathogenesis. Some human Lyme disease patients have antibodies against this protein. The Mlp proteins probably undergo intragenic recombination, generating new alleles. In Borreliella burgdorferi (strain ATCC 35210 / DSM 4680 / CIP 102532 / B31) (Borrelia burgdorferi), this protein is Lipoprotein MlpD.